The chain runs to 538 residues: Eukaryotic translation initiation factor 3 subunit L (538 aa).

The region spanning 305 to 513 (TFSDILLYIQ…IHIADTKVSH (209 aa)) is the PCI domain.

Belongs to the eIF-3 subunit L family. Component of the eukaryotic translation initiation factor 3 (eIF-3) complex. The eIF-3 complex interacts with pix.

It localises to the cytoplasm. In terms of biological role, component of the eukaryotic translation initiation factor 3 (eIF-3) complex, which is involved in protein synthesis of a specialized repertoire of mRNAs and, together with other initiation factors, stimulates binding of mRNA and methionyl-tRNAi to the 40S ribosome. The eIF-3 complex specifically targets and initiates translation of a subset of mRNAs involved in cell proliferation. This is Eukaryotic translation initiation factor 3 subunit L from Drosophila virilis (Fruit fly).